The following is a 141-amino-acid chain: Large ribosomal subunit protein uL16c (141 aa).

Residues Met1–Leu17 are compositionally biased toward basic residues. Residues Met1–Thr20 form a disordered region.

Belongs to the universal ribosomal protein uL16 family. Part of the 50S ribosomal subunit.

It localises to the plastid. Its subcellular location is the chloroplast. The polypeptide is Large ribosomal subunit protein uL16c (Staurastrum punctulatum (Green alga)).